Here is a 283-residue protein sequence, read N- to C-terminus: Phosphatidylserine decarboxylase proenzyme (283 aa).

Catalysis depends on charge relay system; for autoendoproteolytic cleavage activity residues Asp90, His143, and Ser248. Ser248 (schiff-base intermediate with substrate; via pyruvic acid; for decarboxylase activity) is an active-site residue. Ser248 is subject to Pyruvic acid (Ser); by autocatalysis.

Belongs to the phosphatidylserine decarboxylase family. PSD-B subfamily. Prokaryotic type I sub-subfamily. Heterodimer of a large membrane-associated beta subunit and a small pyruvoyl-containing alpha subunit. It depends on pyruvate as a cofactor. In terms of processing, is synthesized initially as an inactive proenzyme. Formation of the active enzyme involves a self-maturation process in which the active site pyruvoyl group is generated from an internal serine residue via an autocatalytic post-translational modification. Two non-identical subunits are generated from the proenzyme in this reaction, and the pyruvate is formed at the N-terminus of the alpha chain, which is derived from the carboxyl end of the proenzyme. The autoendoproteolytic cleavage occurs by a canonical serine protease mechanism, in which the side chain hydroxyl group of the serine supplies its oxygen atom to form the C-terminus of the beta chain, while the remainder of the serine residue undergoes an oxidative deamination to produce ammonia and the pyruvoyl prosthetic group on the alpha chain. During this reaction, the Ser that is part of the protease active site of the proenzyme becomes the pyruvoyl prosthetic group, which constitutes an essential element of the active site of the mature decarboxylase.

The protein resides in the cell membrane. The catalysed reaction is a 1,2-diacyl-sn-glycero-3-phospho-L-serine + H(+) = a 1,2-diacyl-sn-glycero-3-phosphoethanolamine + CO2. Its pathway is phospholipid metabolism; phosphatidylethanolamine biosynthesis; phosphatidylethanolamine from CDP-diacylglycerol: step 2/2. In terms of biological role, catalyzes the formation of phosphatidylethanolamine (PtdEtn) from phosphatidylserine (PtdSer). This chain is Phosphatidylserine decarboxylase proenzyme, found in Francisella tularensis subsp. mediasiatica (strain FSC147).